The primary structure comprises 199 residues: 3-isopropylmalate dehydratase small subunit (199 aa).

This sequence belongs to the LeuD family. LeuD type 1 subfamily. In terms of assembly, heterodimer of LeuC and LeuD.

The catalysed reaction is (2R,3S)-3-isopropylmalate = (2S)-2-isopropylmalate. It functions in the pathway amino-acid biosynthesis; L-leucine biosynthesis; L-leucine from 3-methyl-2-oxobutanoate: step 2/4. Its function is as follows. Catalyzes the isomerization between 2-isopropylmalate and 3-isopropylmalate, via the formation of 2-isopropylmaleate. The chain is 3-isopropylmalate dehydratase small subunit from Aeromonas salmonicida (strain A449).